Consider the following 126-residue polypeptide: Nucleoside diphosphate kinase B (126 aa).

ATP contacts are provided by Lys6, Phe37, Thr68, Arg79, and Asn89. The Pros-phosphohistidine intermediate role is filled by His92.

The protein belongs to the NDK family. It depends on Mg(2+) as a cofactor.

The protein localises to the cytoplasm. It is found in the nucleus. It localises to the cell projection. Its subcellular location is the lamellipodium. The protein resides in the ruffle. It carries out the reaction a 2'-deoxyribonucleoside 5'-diphosphate + ATP = a 2'-deoxyribonucleoside 5'-triphosphate + ADP. The catalysed reaction is a ribonucleoside 5'-diphosphate + ATP = a ribonucleoside 5'-triphosphate + ADP. In terms of biological role, major role in the synthesis of nucleoside triphosphates other than ATP. This is Nucleoside diphosphate kinase B (nme2) from Merluccius capensis (Shallow-water Cape hake).